Reading from the N-terminus, the 421-residue chain is O-glycosyltransferase braB (421 aa).

The tract at residues Met1–Pro26 is disordered. Positions Gly13 to Ala22 are enriched in polar residues.

This sequence belongs to the afumC glycosyltransferase family.

The protein operates within secondary metabolite biosynthesis. In terms of biological role, O-glycosyltransferase; part of the gene cluster that mediates the biosynthesis of the brasilane terpene glycosides brasilane D and E. The biosynthesis starts with the activity of the terpene cyclase braA that converts farnesyl pyrophosphate into the sesquiterpene alcohol trichobrasilenol. Subsequently, trichobrasilenol is glycosylated by the O-glycosyltransferase braB putatively using UDP-GlcNAc as sugar donor to yield brasilane A. The latter then undergoes two rounds of oxidation performed by the cytochrome P450 monooxygenase braC. In the first round braC hydroxylates C-12 forming brasilane D, which serves as substrate in the second round to establish the epoxide at the bond between C-5 and C-10 and oxidize the alcohol at C-12 to an aldehyde leading to the final product brasilane E. BraB is also able to glycosylate geraniol, linalool, perillyl alcohol, 3,4-dichlorophenol and, to a lesser extend, benzyl alcohol. The chain is O-glycosyltransferase braB from Annulohypoxylon truncatum (Hypoxylon truncatum).